A 321-amino-acid chain; its full sequence is Cytochrome f (321 aa).

A signal peptide spans 1-38; it reads MKKNFYTISKTMSRSLKLILFSVFIGFSIFLIPQPTWA. Positions 39, 59, 62, and 63 each coordinate heme. Residues 288–308 traverse the membrane as a helical segment; the sequence is VIGMIIFFIGVGLSQIMLVLK.

The protein belongs to the cytochrome f family. In terms of assembly, the 4 large subunits of the cytochrome b6-f complex are cytochrome b6, subunit IV (17 kDa polypeptide, PetD), cytochrome f and the Rieske protein, while the 4 small subunits are PetG, PetL, PetM and PetN. The complex functions as a dimer. Requires heme as cofactor.

The protein resides in the cellular thylakoid membrane. Component of the cytochrome b6-f complex, which mediates electron transfer between photosystem II (PSII) and photosystem I (PSI), cyclic electron flow around PSI, and state transitions. The polypeptide is Cytochrome f (Prochlorococcus marinus (strain NATL1A)).